Reading from the N-terminus, the 365-residue chain is REVDRVMGLNDRFASYIEKVRFLEQQNKMLVAELNQLRGKEPSRLGDIYQEELRELRRQVDGLNAGKARLEIERDNLASDLATLKQRLQEENALRQEAENNLNTFRQDVDEAALNRVQLERKIDALQDEISFLRKVHEEEMRQLQEQLIAQQVHVDLDVSKPDLTTALKEIRAQFEAMATSNMQETEEWYRSKFADLTDAAGRNAEALRQAKQEANEYRRQIQGLTCDLESLRGSNESLERQLREMEERFAIETAGYQDTVARLEDEIQMLKEEMARHLQEYQDLLNVKLALDIEIATYRKLLEGEESRITVPVQNFTNLQFRDTSLDTKLTPEAHVKRSIVVRTVETRDGEIIKESTTERKDLP.

Positions 1–5 (REVDR) are head. One can recognise an IF rod domain in the interval 2–310 (EVDRVMGLND…KLLEGEESRI (309 aa)). The coil 1A stretch occupies residues 6 to 37 (VMGLNDRFASYIEKVRFLEQQNKMLVAELNQL). The segment at 38–48 (RGKEPSRLGDI) is linker 1. Residues 49-147 (YQEELRELRR…EEEMRQLQEQ (99 aa)) are coil 1B. Positions 148 to 163 (LIAQQVHVDLDVSKPD) are linker 12. The tract at residues 164–185 (LTTALKEIRAQFEAMATSNMQE) is coil 2A. The linker 2 stretch occupies residues 186-189 (TEEW). The segment at 190–310 (YRSKFADLTD…KLLEGEESRI (121 aa)) is coil 2B. The tract at residues 311 to 365 (TVPVQNFTNLQFRDTSLDTKLTPEAHVKRSIVVRTVETRDGEIIKESTTERKDLP) is tail.

The protein belongs to the intermediate filament family.

The polypeptide is Glial fibrillary acidic protein (gfap) (Carassius auratus (Goldfish)).